A 277-amino-acid polypeptide reads, in one-letter code: Intercellular adhesion molecule 2 (277 aa).

An N-terminal signal peptide occupies residues 1 to 22 (MSSFACWSLSLLILFYSPGSGE). Residues 23 to 222 (KAFEVYIWSE…EVYEPMQDNQ (200 aa)) lie on the Extracellular side of the membrane. Ig-like C2-type domains follow at residues 39–98 (TESW…CSGK) and 127–196 (GEDF…LDLR). N-linked (GlcNAc...) asparagine glycans are attached at residues asparagine 45, asparagine 82, asparagine 158, asparagine 176, and asparagine 186. 3 disulfide bridges follow: cysteine 46–cysteine 91, cysteine 50–cysteine 95, and cysteine 134–cysteine 189. A helical membrane pass occupies residues 223–247 (MVIIIVVVSILLFLFVTSVLLCFIF). At 248 to 277 (GQHWHRRRTGTYGVLAAWRRLPRAFRARPV) the chain is on the cytoplasmic side. Residues 250-277 (HWHRRRTGTYGVLAAWRRLPRAFRARPV) are required for interaction with EZR, MSN and RDX and co-localization to microvilli.

Belongs to the immunoglobulin superfamily. ICAM family. Interacts with RDX, EZR and MSN. In terms of tissue distribution, expressed in endothelial cells and leukocytes. High levels found in lung.

The protein resides in the membrane. Its subcellular location is the cell projection. It is found in the microvillus. ICAM proteins are ligands for the leukocyte adhesion protein LFA-1 (integrin alpha-L/beta-2). ICAM2 may play a role in lymphocyte recirculation by blocking LFA-1-dependent cell adhesion. It mediates adhesive interactions important for antigen-specific immune response, NK-cell mediated clearance, lymphocyte recirculation, and other cellular interactions important for immune response and surveillance. The protein is Intercellular adhesion molecule 2 (Icam2) of Mus musculus (Mouse).